Here is a 159-residue protein sequence, read N- to C-terminus: Aspartate carbamoyltransferase regulatory chain (159 aa).

4 residues coordinate Zn(2+): cysteine 113, cysteine 118, cysteine 142, and cysteine 145.

Belongs to the PyrI family. Contains catalytic and regulatory chains. Zn(2+) is required as a cofactor.

Functionally, involved in allosteric regulation of aspartate carbamoyltransferase. The sequence is that of Aspartate carbamoyltransferase regulatory chain from Saccharolobus islandicus (strain Y.N.15.51 / Yellowstone #2) (Sulfolobus islandicus).